The sequence spans 931 residues: Beta-mannosidase A (931 aa).

The first 21 residues, 1-21 (MRHSIGLAAALLAPTLPVALG), serve as a signal peptide directing secretion. Residues Asn-40, Asn-79, Asn-247, Asn-282, and Asn-347 are each glycosylated (N-linked (GlcNAc...) asparagine). Glu-479 functions as the Proton donor in the catalytic mechanism. N-linked (GlcNAc...) asparagine glycans are attached at residues Asn-550, Asn-608, Asn-658, Asn-738, Asn-790, Asn-798, Asn-830, and Asn-918.

Belongs to the glycosyl hydrolase 2 family. Beta-mannosidase A subfamily. In terms of assembly, homodimer. Post-translationally, N-glycosylated.

It localises to the secreted. It carries out the reaction Hydrolysis of terminal, non-reducing beta-D-mannose residues in beta-D-mannosides.. Its pathway is glycan metabolism; N-glycan degradation. Functionally, exoglycosidase that cleaves the single beta-linked mannose residue from the non-reducing end of beta-mannosidic oligosaccharides of various complexity and length. Involved in the degradation of polymeric mannan and galactomannan. Releases the terminal mannose residue from mannobiose and mannotriose, as well as from galactosyl-mannobiose (GM2), galactosyl-mannotriose (GM3) and di-galactosyl-mannopentaose (G2M5). This is Beta-mannosidase A (mndA) from Aspergillus niger.